We begin with the raw amino-acid sequence, 354 residues long: Protein RecA (354 aa).

ATP is bound at residue 67–74 (GPESSGKT). Residues 331–354 (NQDSTPDFSVDDNGEGVKETNEDF) are disordered. Residues 345-354 (EGVKETNEDF) show a composition bias toward basic and acidic residues.

Belongs to the RecA family.

It localises to the cytoplasm. In terms of biological role, can catalyze the hydrolysis of ATP in the presence of single-stranded DNA, the ATP-dependent uptake of single-stranded DNA by duplex DNA, and the ATP-dependent hybridization of homologous single-stranded DNAs. It interacts with LexA causing its activation and leading to its autocatalytic cleavage. The protein is Protein RecA of Citrobacter koseri (strain ATCC BAA-895 / CDC 4225-83 / SGSC4696).